A 156-amino-acid chain; its full sequence is SsrA-binding protein (156 aa).

Belongs to the SmpB family.

It localises to the cytoplasm. In terms of biological role, required for rescue of stalled ribosomes mediated by trans-translation. Binds to transfer-messenger RNA (tmRNA), required for stable association of tmRNA with ribosomes. tmRNA and SmpB together mimic tRNA shape, replacing the anticodon stem-loop with SmpB. tmRNA is encoded by the ssrA gene; the 2 termini fold to resemble tRNA(Ala) and it encodes a 'tag peptide', a short internal open reading frame. During trans-translation Ala-aminoacylated tmRNA acts like a tRNA, entering the A-site of stalled ribosomes, displacing the stalled mRNA. The ribosome then switches to translate the ORF on the tmRNA; the nascent peptide is terminated with the 'tag peptide' encoded by the tmRNA and targeted for degradation. The ribosome is freed to recommence translation, which seems to be the essential function of trans-translation. Required for trans-translation. Probably required for sporulation; deletion of the gene for tmRNA impairs sporulation via its effect on trans-translation, and as smpB is required for trans-translation under non-stress conditions, it is also probably required during sporulation. In Bacillus subtilis (strain 168), this protein is SsrA-binding protein.